We begin with the raw amino-acid sequence, 94 residues long: Co-chaperonin GroES (94 aa).

This sequence belongs to the GroES chaperonin family. In terms of assembly, heptamer of 7 subunits arranged in a ring. Interacts with the chaperonin GroEL.

It is found in the cytoplasm. Together with the chaperonin GroEL, plays an essential role in assisting protein folding. The GroEL-GroES system forms a nano-cage that allows encapsulation of the non-native substrate proteins and provides a physical environment optimized to promote and accelerate protein folding. GroES binds to the apical surface of the GroEL ring, thereby capping the opening of the GroEL channel. The polypeptide is Co-chaperonin GroES (Lactobacillus delbrueckii subsp. bulgaricus (strain ATCC BAA-365 / Lb-18)).